Here is a 32-residue protein sequence, read N- to C-terminus: Calcitonin (32 aa).

A disulfide bond links C1 and C7. P32 is subject to Proline amide.

This sequence belongs to the calcitonin family.

It localises to the secreted. Causes a rapid but short-lived drop in the level of calcium and phosphate in blood by promoting the incorporation of those ions in the bones. This Aquarana catesbeiana (American bullfrog) protein is Calcitonin.